A 396-amino-acid polypeptide reads, in one-letter code: Metallophosphoesterase 1 (396 aa).

Residues 28–48 (TVVIISVLLFCEYFIYYLVLF) form a helical membrane-spanning segment. Residues aspartate 75, aspartate 117, asparagine 155, histidine 249, histidine 303, and histidine 305 each coordinate a divalent metal cation. Residues 356–376 (TVLTMYGAAAGFLMILILVHF) form a helical membrane-spanning segment.

Belongs to the metallophosphoesterase superfamily. MPPE1 family. In terms of assembly, interacts with GPI-anchor proteins (via the GPI portion). Interacts with TMED10. It depends on Mn(2+) as a cofactor.

Its subcellular location is the endoplasmic reticulum-Golgi intermediate compartment membrane. Its function is as follows. Metallophosphoesterase that catalyzes the removal of a side-chain ethanolamine-phosphate (EtNP) from the second mannose of the GPI-anchor protein intermediate. Participates in the glycan remodeling steps of GPI-anchor maturation to allow an efficient transport of GPI-anchor proteins from the endoplasmic reticulum to the Golgi. The protein is Metallophosphoesterase 1 of Mus musculus (Mouse).